The chain runs to 83 residues: Tetracenomycin polyketide synthase acyl carrier protein (83 aa).

The 81-residue stretch at 3-83 (QIGLPRLVEI…VNTETAGEVA (81 aa)) folds into the Carrier domain. Ser-41 is modified (O-(pantetheine 4'-phosphoryl)serine).

The tetracenomycin polyketide synthase (TCM PKS) is composed of a ketosynthase complex (TcmKL), an acyl carrier protein (TcmM), a cyclase (TcmN) and a probable second cyclase (TcmJ). Requires pantetheine 4'-phosphate as cofactor. In terms of processing, 4'-phosphopantetheine is transferred from CoA to a specific serine of apo-ACP.

The enzyme catalyses 10 malonyl-CoA + 8 H(+) = tetracenomycin F2 + 10 CO2 + 10 CoA + 2 H2O. Its pathway is antibiotic biosynthesis; tetracenomycin C biosynthesis. Functionally, involved in the biosynthesis of tetracenomycin C (TCM C). Part of a type II polyketide synthase (PKS) that catalyzes the synthesis of tetracenomycin F2 (TCM F2), a precursor of TCM C, from malonyl-CoA. TcmM is an acyl carrier protein that serves as an acceptor of malonate from malonyl-CoA and acts as the tether for the substrates and intermediates of polyketide assembly. The malonyl CoA-acyl carrier protein transacylase FabD (MCT) is required to catalyze the transacylation between malonyl-CoA and TcmM, although a relatively slow spontaneous self-malonylation of TcmM also occurs in a reaction without the MCT. The polypeptide is Tetracenomycin polyketide synthase acyl carrier protein (Streptomyces glaucescens).